We begin with the raw amino-acid sequence, 589 residues long: WD repeat-containing protein 26 homolog (589 aa).

A disordered region spans residues 1 to 57 (MGVVEDTEPPLKRAKRLADEPNGFSANSSVRGSSVNSNSLGDLMARPLPSQGDDETI). Residues 25–39 (SANSSVRGSSVNSNS) are compositionally biased toward low complexity. Residues 64-96 (RKSEFVRIITRALYSLGYDKTGAMLEEESGISL) form the LisH domain. A CTLH domain is found at 97 to 154 (HNSTIKLFLQQVKDGKWDQSVKTLHRIGFPDEKAVKAASFLLLEQKFLEFLKVEKIAD). WD repeat units follow at residues 272-311 (SHTD…HISL), 317-358 (GHHK…HMYE), 360-398 (GGIS…KECW), 401-440 (QRTQ…ERLI), 442-480 (EEDM…KIVS), 484-526 (GHKR…LIVE), and 529-569 (GHAG…QQNQ).

In terms of assembly, interacts with RANBPM. In terms of tissue distribution, expressed in roots, leaves and flowers.

The protein resides in the cytoplasm. Functionally, acts as a component involved in the crosstalk regulation between light, hormone and abiotic stress response. The chain is WD repeat-containing protein 26 homolog from Arabidopsis thaliana (Mouse-ear cress).